The primary structure comprises 266 residues: Esterase AGAP003155 (266 aa).

Active-site charge relay system residues include Ser-114, Asp-172, and His-199. The interval 231–266 is disordered; that stretch reads ATEENSFHLEGQEEAEESALQPVHEGLQNGSDSDSD.

The protein belongs to the LovG family.

The sequence is that of Esterase AGAP003155 from Anopheles gambiae (African malaria mosquito).